A 151-amino-acid polypeptide reads, in one-letter code: Putative pre-16S rRNA nuclease (151 aa).

Belongs to the YqgF nuclease family.

It is found in the cytoplasm. In terms of biological role, could be a nuclease involved in processing of the 5'-end of pre-16S rRNA. This is Putative pre-16S rRNA nuclease from Thermosynechococcus vestitus (strain NIES-2133 / IAM M-273 / BP-1).